The chain runs to 691 residues: Proprotein convertase subtilisin/kexin type 9 (691 aa).

Positions 1–29 (MGTVSSRRLWWPLPLLLLLLLLGPAGARA) are cleaved as a signal peptide. Residues 30 to 151 (QEDDDGDYEE…IEEDSSVFAQ (122 aa)) constitute a propeptide that is removed on maturation. The residue at position 37 (Tyr-37) is a Sulfotyrosine. Ser-46 is subject to Phosphoserine. The Inhibitor I9 domain occupies 76–148 (TYVVVLKEET…VDYIEEDSSV (73 aa)). In terms of domain architecture, Peptidase S8 spans 154–460 (PWNLERITPA…GWQLFCRTVW (307 aa)). Active-site charge relay system residues include Asp-185 and His-225. 2 disulfides stabilise this stretch: Cys-222–Cys-254 and Cys-322–Cys-357. Residue Ser-385 is the Charge relay system of the active site. Residues 449-691 (GAGWQLFCRT…HLAQASQELQ (243 aa)) are C-terminal domain. Intrachain disulfides connect Cys-456-Cys-526, Cys-476-Cys-525, and Cys-485-Cys-508. The N-linked (GlcNAc...) asparagine glycan is linked to Asn-532. 6 cysteine pairs are disulfide-bonded: Cys-533–Cys-600, Cys-551–Cys-599, Cys-561–Cys-587, Cys-607–Cys-678, Cys-625–Cys-677, and Cys-634–Cys-653. Ser-687 is modified (phosphoserine).

The protein belongs to the peptidase S8 family. As to quaternary structure, monomer. Can self-associate to form dimers and higher multimers which may have increased LDLR degrading activity. The precursor protein but not the mature protein may form multimers. Interacts with APOB, VLDLR, LRP8/APOER2 and BACE1. The full-length immature form (pro-PCSK9) interacts with SCNN1A, SCNN1B and SCNN1G. The pro-PCSK9 form (via C-terminal domain) interacts with LDLR. Interacts (via the C-terminal domain) with ANXA2 (via repeat Annexin 1); the interaction inhibits the degradation of LDLR. It depends on Ca(2+) as a cofactor. Post-translationally, cleavage by furin and PCSK5 generates a truncated inactive protein that is unable to induce LDLR degradation. In terms of processing, undergoes autocatalytic cleavage in the endoplasmic reticulum to release the propeptide from the N-terminus and the cleavage of the propeptide is strictly required for its maturation and activation. The cleaved propeptide however remains associated with the catalytic domain through non-covalent interactions, preventing potential substrates from accessing its active site. As a result, it is secreted from cells as a propeptide-containing, enzymatically inactive protein. Phosphorylation protects the propeptide against proteolysis.

The protein resides in the cytoplasm. The protein localises to the secreted. It is found in the endosome. Its subcellular location is the lysosome. It localises to the cell surface. The protein resides in the endoplasmic reticulum. The protein localises to the golgi apparatus. With respect to regulation, its proteolytic activity is autoinhibited by the non-covalent binding of the propeptide to the catalytic domain. Inhibited by EGTA. Crucial player in the regulation of plasma cholesterol homeostasis. Binds to low-density lipid receptor family members: low density lipoprotein receptor (LDLR), very low density lipoprotein receptor (VLDLR), apolipoprotein E receptor (LRP1/APOER) and apolipoprotein receptor 2 (LRP8/APOER2), and promotes their degradation in intracellular acidic compartments. Acts via a non-proteolytic mechanism to enhance the degradation of the hepatic LDLR through a clathrin LDLRAP1/ARH-mediated pathway. May prevent the recycling of LDLR from endosomes to the cell surface or direct it to lysosomes for degradation. Can induce ubiquitination of LDLR leading to its subsequent degradation. Inhibits intracellular degradation of APOB via the autophagosome/lysosome pathway in a LDLR-independent manner. Involved in the disposal of non-acetylated intermediates of BACE1 in the early secretory pathway. Inhibits epithelial Na(+) channel (ENaC)-mediated Na(+) absorption by reducing ENaC surface expression primarily by increasing its proteasomal degradation. Regulates neuronal apoptosis via modulation of LRP8/APOER2 levels and related anti-apoptotic signaling pathways. This Saimiri boliviensis boliviensis (Bolivian squirrel monkey) protein is Proprotein convertase subtilisin/kexin type 9 (PCSK9).